The chain runs to 211 residues: MTETGERLRGLYAVTPDIPTDIEDLRARAEAVLRGGARLLQYRDKSADLPRREQAARALRALCERHGALFIVNDDVALALRVGAHGVHLGQQDMPLAEARAMLGREAIIGITCHERLDLALSAQAAGADYVAFGAVYPSPTKPGAVRAPLPLFTEARETLSIPVCAIGGIEADNAAAVIAAGADMVAVVSGVFARPDPEAEARRLAAMFEV.

4-amino-2-methyl-5-(diphosphooxymethyl)pyrimidine contacts are provided by residues 41–45 (QYRDK) and Asn-73. Positions 74 and 93 each coordinate Mg(2+). Thr-112 provides a ligand contact to 4-amino-2-methyl-5-(diphosphooxymethyl)pyrimidine. 139–141 (SPT) lines the 2-[(2R,5Z)-2-carboxy-4-methylthiazol-5(2H)-ylidene]ethyl phosphate pocket. Lys-142 is a 4-amino-2-methyl-5-(diphosphooxymethyl)pyrimidine binding site. 2-[(2R,5Z)-2-carboxy-4-methylthiazol-5(2H)-ylidene]ethyl phosphate contacts are provided by residues Gly-169 and 189–190 (VS).

The protein belongs to the thiamine-phosphate synthase family. The cofactor is Mg(2+).

The enzyme catalyses 2-[(2R,5Z)-2-carboxy-4-methylthiazol-5(2H)-ylidene]ethyl phosphate + 4-amino-2-methyl-5-(diphosphooxymethyl)pyrimidine + 2 H(+) = thiamine phosphate + CO2 + diphosphate. It carries out the reaction 2-(2-carboxy-4-methylthiazol-5-yl)ethyl phosphate + 4-amino-2-methyl-5-(diphosphooxymethyl)pyrimidine + 2 H(+) = thiamine phosphate + CO2 + diphosphate. It catalyses the reaction 4-methyl-5-(2-phosphooxyethyl)-thiazole + 4-amino-2-methyl-5-(diphosphooxymethyl)pyrimidine + H(+) = thiamine phosphate + diphosphate. The protein operates within cofactor biosynthesis; thiamine diphosphate biosynthesis; thiamine phosphate from 4-amino-2-methyl-5-diphosphomethylpyrimidine and 4-methyl-5-(2-phosphoethyl)-thiazole: step 1/1. Its function is as follows. Condenses 4-methyl-5-(beta-hydroxyethyl)thiazole monophosphate (THZ-P) and 2-methyl-4-amino-5-hydroxymethyl pyrimidine pyrophosphate (HMP-PP) to form thiamine monophosphate (TMP). This Thioalkalivibrio sulfidiphilus (strain HL-EbGR7) protein is Thiamine-phosphate synthase.